A 603-amino-acid chain; its full sequence is UvrABC system protein C (603 aa).

The GIY-YIG domain maps to 15–92; that stretch reads DQPGCYLMKD…IKKHDPRFNI (78 aa). Residues 197-232 form the UVR domain; sequence KTVKNDLMKKMQEAAENMEFEKAGEFRDQINAIETT.

The protein belongs to the UvrC family. As to quaternary structure, interacts with UvrB in an incision complex.

It is found in the cytoplasm. Functionally, the UvrABC repair system catalyzes the recognition and processing of DNA lesions. UvrC both incises the 5' and 3' sides of the lesion. The N-terminal half is responsible for the 3' incision and the C-terminal half is responsible for the 5' incision. This is UvrABC system protein C from Listeria monocytogenes serotype 4a (strain HCC23).